Consider the following 330-residue polypeptide: Flotillin-like protein FloA (330 aa).

The next 2 helical transmembrane spans lie at 6 to 26 (LFLLLIIAAGIILLAVFFTFV) and 28 to 48 (VMLWISALAAGVKISIFTLIG).

This sequence belongs to the flotillin-like FloA family. In terms of assembly, homooligomerizes.

The protein localises to the cell membrane. The protein resides in the membrane raft. Its function is as follows. Found in functional membrane microdomains (FMM) that may be equivalent to eukaryotic membrane rafts. FMMs are highly dynamic and increase in number as cells age. Flotillins are thought to be important factors in membrane fluidity. This is Flotillin-like protein FloA from Bacillus licheniformis (strain ATCC 14580 / DSM 13 / JCM 2505 / CCUG 7422 / NBRC 12200 / NCIMB 9375 / NCTC 10341 / NRRL NRS-1264 / Gibson 46).